Reading from the N-terminus, the 273-residue chain is Dermonecrotic toxin LhSicTox-alphaIA1i (273 aa).

His-5 is an active-site residue. Residues Glu-25 and Asp-27 each contribute to the Mg(2+) site. The Nucleophile role is filled by His-41. 2 disulfides stabilise this stretch: Cys-45/Cys-51 and Cys-47/Cys-190. Asp-85 provides a ligand contact to Mg(2+).

Belongs to the arthropod phospholipase D family. Class II subfamily. It depends on Mg(2+) as a cofactor. In terms of tissue distribution, expressed by the venom gland.

The protein localises to the secreted. The enzyme catalyses an N-(acyl)-sphingosylphosphocholine = an N-(acyl)-sphingosyl-1,3-cyclic phosphate + choline. The catalysed reaction is an N-(acyl)-sphingosylphosphoethanolamine = an N-(acyl)-sphingosyl-1,3-cyclic phosphate + ethanolamine. It carries out the reaction a 1-acyl-sn-glycero-3-phosphocholine = a 1-acyl-sn-glycero-2,3-cyclic phosphate + choline. It catalyses the reaction a 1-acyl-sn-glycero-3-phosphoethanolamine = a 1-acyl-sn-glycero-2,3-cyclic phosphate + ethanolamine. Dermonecrotic toxins cleave the phosphodiester linkage between the phosphate and headgroup of certain phospholipids (sphingolipid and lysolipid substrates), forming an alcohol (often choline) and a cyclic phosphate. This toxin acts on sphingomyelin (SM). It may also act on ceramide phosphoethanolamine (CPE), lysophosphatidylcholine (LPC) and lysophosphatidylethanolamine (LPE), but not on lysophosphatidylserine (LPS), and lysophosphatidylglycerol (LPG). It acts by transphosphatidylation, releasing exclusively cyclic phosphate products as second products. Induces dermonecrosis, hemolysis, increased vascular permeability, edema, inflammatory response, and platelet aggregation. The protein is Dermonecrotic toxin LhSicTox-alphaIA1i of Loxosceles hirsuta (Recluse spider).